We begin with the raw amino-acid sequence, 243 residues long: MRFDVLTLFPEIPEAFFKTSIMAKAVEKGIISCNLVNIRDFAFDKHRSCDDIVYGGGAGMLLLPEPLSLALDSVNASSKRVIYVTPSGKPFNQELAKEFSSEEALVFVCGRYEGIDQRIIDEYVDDEISVGDYVMSSGELAALVIIDAVYRLIDGVISGESLEEESFSGFLLEYPQYTRPRNFKGKEVPEVLLSGHHLNIHKWRLKKRIEKTLKTRPDLIEKARNCGMWTKEAEKILKEFENE.

Residues Gly110 and 130 to 135 (VGDYVM) contribute to the S-adenosyl-L-methionine site.

It belongs to the RNA methyltransferase TrmD family. As to quaternary structure, homodimer.

Its subcellular location is the cytoplasm. The enzyme catalyses guanosine(37) in tRNA + S-adenosyl-L-methionine = N(1)-methylguanosine(37) in tRNA + S-adenosyl-L-homocysteine + H(+). Its function is as follows. Specifically methylates guanosine-37 in various tRNAs. This is tRNA (guanine-N(1)-)-methyltransferase from Treponema denticola (strain ATCC 35405 / DSM 14222 / CIP 103919 / JCM 8153 / KCTC 15104).